We begin with the raw amino-acid sequence, 379 residues long: Queuine tRNA-ribosyltransferase (379 aa).

The Proton acceptor role is filled by Asp94. Substrate-binding positions include 94–98 (DSGGF), Asp148, Gln191, and Gly218. Residues 249–255 (GVGSPDS) form an RNA binding region. Asp268 acts as the Nucleophile in catalysis. Residues 273–277 (TRIGR) are RNA binding; important for wobble base 34 recognition. Residues Cys306, Cys308, Cys311, and His337 each coordinate Zn(2+).

It belongs to the queuine tRNA-ribosyltransferase family. As to quaternary structure, homodimer. Within each dimer, one monomer is responsible for RNA recognition and catalysis, while the other monomer binds to the replacement base PreQ1. Zn(2+) is required as a cofactor.

It carries out the reaction 7-aminomethyl-7-carbaguanine + guanosine(34) in tRNA = 7-aminomethyl-7-carbaguanosine(34) in tRNA + guanine. Its pathway is tRNA modification; tRNA-queuosine biosynthesis. Catalyzes the base-exchange of a guanine (G) residue with the queuine precursor 7-aminomethyl-7-deazaguanine (PreQ1) at position 34 (anticodon wobble position) in tRNAs with GU(N) anticodons (tRNA-Asp, -Asn, -His and -Tyr). Catalysis occurs through a double-displacement mechanism. The nucleophile active site attacks the C1' of nucleotide 34 to detach the guanine base from the RNA, forming a covalent enzyme-RNA intermediate. The proton acceptor active site deprotonates the incoming PreQ1, allowing a nucleophilic attack on the C1' of the ribose to form the product. After dissociation, two additional enzymatic reactions on the tRNA convert PreQ1 to queuine (Q), resulting in the hypermodified nucleoside queuosine (7-(((4,5-cis-dihydroxy-2-cyclopenten-1-yl)amino)methyl)-7-deazaguanosine). This chain is Queuine tRNA-ribosyltransferase, found in Anoxybacillus flavithermus (strain DSM 21510 / WK1).